The chain runs to 102 residues: Small integral membrane protein 29 (102 aa).

Asn3 is a glycosylation site (N-linked (GlcNAc...) asparagine). Residues 21-41 form a helical membrane-spanning segment; sequence VLGPFFLITLVGVVVAVVMYV.

The protein localises to the membrane. The polypeptide is Small integral membrane protein 29 (Mus musculus (Mouse)).